A 357-amino-acid polypeptide reads, in one-letter code: Peptide chain release factor 1 (357 aa).

At Gln-234 the chain carries N5-methylglutamine. A disordered region spans residues 283 to 313 (SKKQEQRSSNRKQQVGSGDRSERIRTYNFPQ).

The protein belongs to the prokaryotic/mitochondrial release factor family. In terms of processing, methylated by PrmC. Methylation increases the termination efficiency of RF1.

It is found in the cytoplasm. Peptide chain release factor 1 directs the termination of translation in response to the peptide chain termination codons UAG and UAA. The chain is Peptide chain release factor 1 (prfA) from Borreliella burgdorferi (strain ATCC 35210 / DSM 4680 / CIP 102532 / B31) (Borrelia burgdorferi).